A 1058-amino-acid chain; its full sequence is Carbamoyl phosphate synthase large chain (1058 aa).

The interval 1–401 (MAKRTDIKKI…CLLKACRSLE (401 aa)) is carboxyphosphate synthetic domain. ATP is bound by residues Arg-129, Arg-169, Gly-175, Gly-176, Arg-208, Ile-210, Glu-215, Gly-241, Ile-242, His-243, Gln-284, and Glu-298. The region spanning 133–327 (KQLMKELGEP…IAKIAAKIAV (195 aa)) is the ATP-grasp 1 domain. Gln-284, Glu-298, and Asn-300 together coordinate Mg(2+). Residues Gln-284, Glu-298, and Asn-300 each contribute to the Mn(2+) site. The interval 402–546 (IGVDHNELKG…YSTYEWENES (145 aa)) is oligomerization domain. Residues 547–929 (IKSEKESVIV…ALYKAFEASY (383 aa)) form a carbamoyl phosphate synthetic domain region. Residues 671-861 (EKALKDLGIP…MAQVATKLIL (191 aa)) form the ATP-grasp 2 domain. 10 residues coordinate ATP: Arg-707, Ser-746, Ile-748, Glu-752, Gly-777, Val-778, His-779, Ser-780, Gln-820, and Glu-832. Mg(2+) contacts are provided by Gln-820, Glu-832, and Asn-834. The Mn(2+) site is built by Gln-820, Glu-832, and Asn-834. In terms of domain architecture, MGS-like spans 930–1058 (LHMPEYGTIV…ESRTFSIEAI (129 aa)). Positions 930–1058 (LHMPEYGTIV…ESRTFSIEAI (129 aa)) are allosteric domain.

This sequence belongs to the CarB family. Composed of two chains; the small (or glutamine) chain promotes the hydrolysis of glutamine to ammonia, which is used by the large (or ammonia) chain to synthesize carbamoyl phosphate. Tetramer of heterodimers (alpha,beta)4. Requires Mg(2+) as cofactor. The cofactor is Mn(2+).

The enzyme catalyses hydrogencarbonate + L-glutamine + 2 ATP + H2O = carbamoyl phosphate + L-glutamate + 2 ADP + phosphate + 2 H(+). The catalysed reaction is hydrogencarbonate + NH4(+) + 2 ATP = carbamoyl phosphate + 2 ADP + phosphate + 2 H(+). It functions in the pathway amino-acid biosynthesis; L-arginine biosynthesis; carbamoyl phosphate from bicarbonate: step 1/1. Its pathway is pyrimidine metabolism; UMP biosynthesis via de novo pathway; (S)-dihydroorotate from bicarbonate: step 1/3. In terms of biological role, large subunit of the glutamine-dependent carbamoyl phosphate synthetase (CPSase). CPSase catalyzes the formation of carbamoyl phosphate from the ammonia moiety of glutamine, carbonate, and phosphate donated by ATP, constituting the first step of 2 biosynthetic pathways, one leading to arginine and/or urea and the other to pyrimidine nucleotides. The large subunit (synthetase) binds the substrates ammonia (free or transferred from glutamine from the small subunit), hydrogencarbonate and ATP and carries out an ATP-coupled ligase reaction, activating hydrogencarbonate by forming carboxy phosphate which reacts with ammonia to form carbamoyl phosphate. In Streptococcus equi subsp. zooepidemicus (strain H70), this protein is Carbamoyl phosphate synthase large chain.